We begin with the raw amino-acid sequence, 440 residues long: tRNA-2-methylthio-N(6)-dimethylallyladenosine synthase (440 aa).

The MTTase N-terminal domain occupies 5-121 (KKLYIKTYGC…LPEMEAKAGT (117 aa)). Positions 14, 50, 84, 159, 163, and 166 each coordinate [4Fe-4S] cluster. A Radical SAM core domain is found at 145 to 378 (AKRGPTAFLT…LTRQQREVQD (234 aa)). Residues 378–440 (DSMVGRELGV…ANSLAGELID (63 aa)) form the TRAM domain.

This sequence belongs to the methylthiotransferase family. MiaB subfamily. As to quaternary structure, monomer. Requires [4Fe-4S] cluster as cofactor.

It is found in the cytoplasm. The catalysed reaction is N(6)-dimethylallyladenosine(37) in tRNA + (sulfur carrier)-SH + AH2 + 2 S-adenosyl-L-methionine = 2-methylsulfanyl-N(6)-dimethylallyladenosine(37) in tRNA + (sulfur carrier)-H + 5'-deoxyadenosine + L-methionine + A + S-adenosyl-L-homocysteine + 2 H(+). Functionally, catalyzes the methylthiolation of N6-(dimethylallyl)adenosine (i(6)A), leading to the formation of 2-methylthio-N6-(dimethylallyl)adenosine (ms(2)i(6)A) at position 37 in tRNAs that read codons beginning with uridine. The sequence is that of tRNA-2-methylthio-N(6)-dimethylallyladenosine synthase from Ruegeria sp. (strain TM1040) (Silicibacter sp.).